Consider the following 448-residue polypeptide: Solute carrier family 52, riboflavin transporter, member 2 (448 aa).

The next 5 membrane-spanning stretches (helical) occupy residues 14-34 (LLVALLGMGSWAAVNGIWVEL), 47-67 (LPSYLSVVVALGNLGLLVVTL), 79-99 (VPIQVVQVLSVVGTALLAPLW), 105-125 (VAGQLHSVAFLTLALVLALAC), and 147-167 (FFLGQGLSALLPCVLALVQGV). Asn-178 carries an N-linked (GlcNAc...) asparagine glycan. A helical membrane pass occupies residues 198-218 (WALTALLVTSAAAFQGLLLLL). The interval 228–267 (GAGPELPLGSPGAEEEEKEEEEALPLQEPPSQAAGTIPGP) is disordered. Residues 240–250 (AEEEEKEEEEA) are compositionally biased toward acidic residues. The next 5 membrane-spanning stretches (helical) occupy residues 280–300 (AFLLGLLAITSALTNGVLPAV), 315–335 (LAVVLGSAANPLACFLAMGVL), 342–362 (LVGLSLLGMLFGAYLMVLAIL), 369–389 (VGTTAGVVLVVLSWVLCLCVF), and 407–427 (ALLAAGVAIQMGSLLGAGTMF).

This sequence belongs to the riboflavin transporter family.

The protein localises to the cell membrane. The catalysed reaction is riboflavin(in) = riboflavin(out). Its activity is regulated as follows. Riboflavin transport is Na(+)-independent but moderately pH-sensitive. Activity is strongly inhibited by riboflavin analogs, such as lumiflavin. Weakly inhibited by flavin adenine dinucleotide (FAD) and flavin mononucleotide (FMN). Functionally, plasma membrane transporter mediating the uptake by cells of the water soluble vitamin B2/riboflavin that plays a key role in biochemical oxidation-reduction reactions of the carbohydrate, lipid, and amino acid metabolism. May also act as a receptor for 4-hydroxybutyrate. (Microbial infection) In case of infection by retroviruses, acts as a cell receptor to retroviral envelopes similar to the porcine endogenous retrovirus (PERV-A). In Papio hamadryas (Hamadryas baboon), this protein is Solute carrier family 52, riboflavin transporter, member 2 (SLC52A2).